The sequence spans 502 residues: tRNA-specific adenosine deaminase 1 (502 aa).

The 439-residue stretch at 63 to 501 (SMGTGTKCIG…IRNPPDYHQF (439 aa)) folds into the A to I editase domain. Residue H87 coordinates Zn(2+). The Proton donor role is filled by E89. 1D-myo-inositol hexakisphosphate contacts are provided by R93 and R94. C142 contributes to the Zn(2+) binding site. Positions 174-194 (SSNLEAPGNERKCEDPDSPVT) are disordered. Residue S191 is modified to Phosphoserine. C299 is a binding site for Zn(2+). 1D-myo-inositol hexakisphosphate is bound by residues K302, R305, K435, and K470.

This sequence belongs to the ADAT1 family. 1D-myo-inositol hexakisphosphate is required as a cofactor. Ubiquitously expressed.

It catalyses the reaction adenosine(37) in tRNA(Ala) + H2O + H(+) = inosine(37) in tRNA(Ala) + NH4(+). Specifically deaminates adenosine-37 to inosine in tRNA-Ala. This Homo sapiens (Human) protein is tRNA-specific adenosine deaminase 1 (ADAT1).